The following is a 491-amino-acid chain: Conidiogenone synthase PchP450 (491 aa).

A helical membrane pass occupies residues 2-22 (LLLWFGFFSFVCGLVIYRLQF). Cys-430 provides a ligand contact to heme.

Belongs to the cytochrome P450 family. Heme serves as cofactor.

It is found in the membrane. It participates in secondary metabolite biosynthesis; terpenoid biosynthesis. Its function is as follows. Cytochrome P450 monooxygenase; part of the gene cluster that mediates the biosynthesis of conidiogenone, a diterpene known to induce the conidiation. The bifunctional terpene synthase PrDS converts isopentenyl diphosphate (IPP) and dimethylallyl diphosphate (DMAPP) into deoxyconidiogenol. The C-terminal prenyltransferase (PT) domain of PrDS catalyzes formation of GGPP, whereas the N-terminal terpene cyclase (TC) domain catalyzes the cyclization of GGPP into deoxyconidiogenol. The cytochrome P450 monooxygenase PrP450 then catalyzes two rounds of oxidation to furnish conidiogenone. The sequence is that of Conidiogenone synthase PchP450 from Penicillium rubens (strain ATCC 28089 / DSM 1075 / NRRL 1951 / Wisconsin 54-1255) (Penicillium chrysogenum).